We begin with the raw amino-acid sequence, 341 residues long: tRNA N6-adenosine threonylcarbamoyltransferase (341 aa).

Residues histidine 110 and histidine 114 each coordinate Fe cation. Substrate is bound by residues 133–137 (LVSGG), aspartate 166, glycine 179, and asparagine 276. Fe cation is bound at residue aspartate 304.

Belongs to the KAE1 / TsaD family. Requires Fe(2+) as cofactor.

The protein localises to the cytoplasm. It carries out the reaction L-threonylcarbamoyladenylate + adenosine(37) in tRNA = N(6)-L-threonylcarbamoyladenosine(37) in tRNA + AMP + H(+). In terms of biological role, required for the formation of a threonylcarbamoyl group on adenosine at position 37 (t(6)A37) in tRNAs that read codons beginning with adenine. Is involved in the transfer of the threonylcarbamoyl moiety of threonylcarbamoyl-AMP (TC-AMP) to the N6 group of A37, together with TsaE and TsaB. TsaD likely plays a direct catalytic role in this reaction. This Saccharophagus degradans (strain 2-40 / ATCC 43961 / DSM 17024) protein is tRNA N6-adenosine threonylcarbamoyltransferase.